The following is a 384-amino-acid chain: Lipid-A-disaccharide synthase (384 aa).

Belongs to the LpxB family.

The enzyme catalyses a lipid X + a UDP-2-N,3-O-bis[(3R)-3-hydroxyacyl]-alpha-D-glucosamine = a lipid A disaccharide + UDP + H(+). The protein operates within bacterial outer membrane biogenesis; LPS lipid A biosynthesis. Condensation of UDP-2,3-diacylglucosamine and 2,3-diacylglucosamine-1-phosphate to form lipid A disaccharide, a precursor of lipid A, a phosphorylated glycolipid that anchors the lipopolysaccharide to the outer membrane of the cell. This is Lipid-A-disaccharide synthase from Geobacter metallireducens (strain ATCC 53774 / DSM 7210 / GS-15).